The following is a 220-amino-acid chain: Uracil-DNA glycosylase (220 aa).

Asp-65 (proton acceptor) is an active-site residue.

Belongs to the uracil-DNA glycosylase (UDG) superfamily. UNG family.

The protein resides in the cytoplasm. It carries out the reaction Hydrolyzes single-stranded DNA or mismatched double-stranded DNA and polynucleotides, releasing free uracil.. Excises uracil residues from the DNA which can arise as a result of misincorporation of dUMP residues by DNA polymerase or due to deamination of cytosine. This is Uracil-DNA glycosylase from Bacteroides thetaiotaomicron (strain ATCC 29148 / DSM 2079 / JCM 5827 / CCUG 10774 / NCTC 10582 / VPI-5482 / E50).